Here is a 509-residue protein sequence, read N- to C-terminus: Dihydrolipoyl dehydrogenase, mitochondrial (509 aa).

The transit peptide at 1 to 35 (MQSWSRVYRSLAKKGHFNRISHGLQGVSSVPLRTY) directs the protein to the mitochondrion. An N6-acetyllysine; alternate modification is found at Lys66. The residue at position 66 (Lys66) is an N6-succinyllysine; alternate. FAD-binding positions include 71 to 80 (EKNETLGGTC) and Lys89. Cys80 and Cys85 are disulfide-bonded. Residues Lys104, Lys122, Lys132, and Lys143 each carry the N6-acetyllysine; alternate modification. Lys104, Lys122, Lys132, and Lys143 each carry N6-succinyllysine; alternate. Gly154 is a binding site for FAD. Lys159 and Lys166 each carry N6-succinyllysine. 183-185 (TGS) is an FAD binding site. NAD(+)-binding positions include 220-227 (GAGVIGVE) and Glu243. N6-succinyllysine is present on residues Lys273 and Lys277. Val278 is a binding site for NAD(+). Phosphoserine is present on residues Ser285 and Ser297. Gly314 is an NAD(+) binding site. An N6-acetyllysine; alternate modification is found at Lys334. Position 334 is an N6-succinyllysine; alternate (Lys334). Lys346 is subject to N6-acetyllysine. Residues Asp355 and 361–364 (MLAH) each bind FAD. The residue at position 410 (Lys410) is an N6-acetyllysine; alternate. Lys410 carries the post-translational modification N6-succinyllysine; alternate. 2 positions are modified to N6-acetyllysine: Lys417 and Lys420. Lys430 is subject to N6-succinyllysine. The Proton acceptor role is filled by His487. The residue at position 505 (Lys505) is an N6-acetyllysine; alternate. The residue at position 505 (Lys505) is an N6-succinyllysine; alternate.

This sequence belongs to the class-I pyridine nucleotide-disulfide oxidoreductase family. Homodimer. Part of the multimeric pyruvate dehydrogenase complex that contains multiple copies of pyruvate dehydrogenase (subunits PDHA (PDHA1 or PDHA2) and PDHB, E1), dihydrolipoamide acetyltransferase (DLAT, E2) and lipoamide dehydrogenase (DLD, E3). These subunits are bound to an inner core composed of about 48 DLAT and 12 PDHX molecules (by non covalent bonds). The 2-oxoglutarate dehydrogenase complex is composed of OGDH (2-oxoglutarate dehydrogenase; E1), DLST (dihydrolipoamide succinyltransferase; E2), DLD (dihydrolipoamide dehydrogenase; E3) and the assembly factor KGD4. It contains multiple copies of the three enzymatic components (E1, E2 and E3). In the nucleus, the 2-oxoglutarate dehydrogenase complex associates with KAT2A. Interacts with PDHX. FAD is required as a cofactor. Tyrosine phosphorylated. In terms of tissue distribution, expressed in liver (at protein level).

It localises to the mitochondrion matrix. Its subcellular location is the nucleus. It is found in the cell projection. The protein localises to the cilium. The protein resides in the flagellum. It localises to the cytoplasmic vesicle. Its subcellular location is the secretory vesicle. It is found in the acrosome. The catalysed reaction is N(6)-[(R)-dihydrolipoyl]-L-lysyl-[protein] + NAD(+) = N(6)-[(R)-lipoyl]-L-lysyl-[protein] + NADH + H(+). In terms of biological role, lipoamide dehydrogenase is a component of the glycine cleavage system as well as an E3 component of three alpha-ketoacid dehydrogenase complexes (pyruvate-, alpha-ketoglutarate-, and branched-chain amino acid-dehydrogenase complex). The 2-oxoglutarate dehydrogenase complex is mainly active in the mitochondrion. A fraction of the 2-oxoglutarate dehydrogenase complex also localizes in the nucleus and is required for lysine succinylation of histones: associates with KAT2A on chromatin and provides succinyl-CoA to histone succinyltransferase KAT2A. In monomeric form may have additional moonlighting function as serine protease. Involved in the hyperactivation of spermatazoa during capacitation and in the spermatazoal acrosome reaction. The sequence is that of Dihydrolipoyl dehydrogenase, mitochondrial (Dld) from Mus musculus (Mouse).